The following is a 500-amino-acid chain: Cytochrome P450 CYP736A12 (500 aa).

The chain crosses the membrane as a helical span at residues 4–24 (LAYPLLFVLLGALSWWILPII). Heme is bound at residue Cys-442.

The protein belongs to the cytochrome P450 family. Heme serves as cofactor.

Its subcellular location is the membrane. Its function is as follows. Probable heme-thiolate monooxygenase. The sequence is that of Cytochrome P450 CYP736A12 from Panax ginseng (Korean ginseng).